The following is a 375-amino-acid chain: Succinyl-diaminopimelate desuccinylase (375 aa).

H66 contacts Zn(2+). D68 is a catalytic residue. D99 lines the Zn(2+) pocket. Residue E133 is the Proton acceptor of the active site. The Zn(2+) site is built by E134, E162, and H348.

Belongs to the peptidase M20A family. DapE subfamily. In terms of assembly, homodimer. Zn(2+) is required as a cofactor. Co(2+) serves as cofactor.

It catalyses the reaction N-succinyl-(2S,6S)-2,6-diaminopimelate + H2O = (2S,6S)-2,6-diaminopimelate + succinate. The protein operates within amino-acid biosynthesis; L-lysine biosynthesis via DAP pathway; LL-2,6-diaminopimelate from (S)-tetrahydrodipicolinate (succinylase route): step 3/3. In terms of biological role, catalyzes the hydrolysis of N-succinyl-L,L-diaminopimelic acid (SDAP), forming succinate and LL-2,6-diaminopimelate (DAP), an intermediate involved in the bacterial biosynthesis of lysine and meso-diaminopimelic acid, an essential component of bacterial cell walls. This chain is Succinyl-diaminopimelate desuccinylase, found in Aeromonas hydrophila subsp. hydrophila (strain ATCC 7966 / DSM 30187 / BCRC 13018 / CCUG 14551 / JCM 1027 / KCTC 2358 / NCIMB 9240 / NCTC 8049).